The primary structure comprises 289 residues: Phosphatidylserine decarboxylase proenzyme (289 aa).

Active-site charge relay system; for autoendoproteolytic cleavage activity residues include Asp-89, His-146, and Ser-252. Ser-252 (schiff-base intermediate with substrate; via pyruvic acid; for decarboxylase activity) is an active-site residue. A Pyruvic acid (Ser); by autocatalysis modification is found at Ser-252.

The protein belongs to the phosphatidylserine decarboxylase family. PSD-B subfamily. Prokaryotic type I sub-subfamily. As to quaternary structure, heterodimer of a large membrane-associated beta subunit and a small pyruvoyl-containing alpha subunit. Requires pyruvate as cofactor. Is synthesized initially as an inactive proenzyme. Formation of the active enzyme involves a self-maturation process in which the active site pyruvoyl group is generated from an internal serine residue via an autocatalytic post-translational modification. Two non-identical subunits are generated from the proenzyme in this reaction, and the pyruvate is formed at the N-terminus of the alpha chain, which is derived from the carboxyl end of the proenzyme. The autoendoproteolytic cleavage occurs by a canonical serine protease mechanism, in which the side chain hydroxyl group of the serine supplies its oxygen atom to form the C-terminus of the beta chain, while the remainder of the serine residue undergoes an oxidative deamination to produce ammonia and the pyruvoyl prosthetic group on the alpha chain. During this reaction, the Ser that is part of the protease active site of the proenzyme becomes the pyruvoyl prosthetic group, which constitutes an essential element of the active site of the mature decarboxylase.

It localises to the cell membrane. It carries out the reaction a 1,2-diacyl-sn-glycero-3-phospho-L-serine + H(+) = a 1,2-diacyl-sn-glycero-3-phosphoethanolamine + CO2. It functions in the pathway phospholipid metabolism; phosphatidylethanolamine biosynthesis; phosphatidylethanolamine from CDP-diacylglycerol: step 2/2. Functionally, catalyzes the formation of phosphatidylethanolamine (PtdEtn) from phosphatidylserine (PtdSer). The sequence is that of Phosphatidylserine decarboxylase proenzyme from Nitrosospira multiformis (strain ATCC 25196 / NCIMB 11849 / C 71).